The chain runs to 282 residues: Biotin synthase (282 aa).

The Radical SAM core domain occupies 1–228; that stretch reads MQEIFLCSIS…NARLMVAGGR (228 aa). 3 residues coordinate [4Fe-4S] cluster: C17, C21, and C24. The [2Fe-2S] cluster site is built by C61, C96, C154, and R221.

The protein belongs to the radical SAM superfamily. Biotin synthase family. In terms of assembly, homodimer. The cofactor is [4Fe-4S] cluster. [2Fe-2S] cluster serves as cofactor.

It carries out the reaction (4R,5S)-dethiobiotin + (sulfur carrier)-SH + 2 reduced [2Fe-2S]-[ferredoxin] + 2 S-adenosyl-L-methionine = (sulfur carrier)-H + biotin + 2 5'-deoxyadenosine + 2 L-methionine + 2 oxidized [2Fe-2S]-[ferredoxin]. The protein operates within cofactor biosynthesis; biotin biosynthesis; biotin from 7,8-diaminononanoate: step 2/2. Catalyzes the conversion of dethiobiotin (DTB) to biotin by the insertion of a sulfur atom into dethiobiotin via a radical-based mechanism. The chain is Biotin synthase from Helicobacter pylori (strain G27).